The chain runs to 733 residues: MKKINNNKIFVLFLTILLYLLNITTAQKPVSINIKIFDQLPLYNDNFGSQSRAATIKSMVATSLNTTFKTPSLGSATSSLPSPQLFQYWFQSNFANETKNSGLNAPLTRTITLNYDSDSGNYIFNNPNFFLIDTDGFDKTASNRIYKDSTGTYHNYHYCVAFNYVFKPDGQGKEMFKFTGNDDVWVFVNNKLLLDGGGVRSPEATTVDFTKAGLVKSQETPLDFFYCERSTNSPPSFKIETNLGGLYCKAYDYCGVCNGDGGTCCNPQTDCLTQLENGTLINDKCTIPICPPLDTQIDKNLGIGFFCQHSQIPDPYAGSLCEKGECDSLTGIWTRNTSICPTDKDLAPQCRKQATCDPKLGCQSTYLCNNVCDIGTCNNGTCTQKTSNDCVQELDRGVEDKCFTYKCVPNVGCSKTPICPRGTDPCKNYTCSGGICGTVDIPQSECSCPCPGLNKCNTRICNPDNTCTLFNLTEINDGNPCTDDLCDPVTGDITHVMTTRCSGCNTCDVKTGKCVAQDSHCDDGNPCTDNACVASANSTANSQVGQCTQTPTAKCDLGDKCMVYSCTLEGGCNATQRVCPNSGACKIGYCEPGFGCKLKDRVCSSDWYCIEAQCDAKYGCIQFDRRCAPDNSKCQEGVCVNNTAIGKNDGKCISEDYDPKPFVCQKAALVSTAVIASVVVVGAVVLGAAIFAGKKGYDAWKTSQGNVMAASQANPLYTQSSNGGENPLYNSPT.

The first 26 residues, 1–26 (MKKINNNKIFVLFLTILLYLLNITTA), serve as a signal peptide directing secretion. Residues asparagine 22, asparagine 65, and asparagine 96 are each glycosylated (N-linked (GlcNAc...) asparagine). Topologically, residues 27–672 (QKPVSINIKI…VCQKAALVST (646 aa)) are extracellular. The region spanning 114 to 260 (NYDSDSGNYI…YDYCGVCNGD (147 aa)) is the PA14 domain. N-linked (GlcNAc...) asparagine glycosylation is found at asparagine 277, asparagine 336, asparagine 379, asparagine 428, asparagine 471, asparagine 537, asparagine 573, and asparagine 641. The chain crosses the membrane as a helical span at residues 673-693 (AVIASVVVVGAVVLGAAIFAG). Over 694–733 (KKGYDAWKTSQGNVMAASQANPLYTQSSNGGENPLYNSPT) the chain is Cytoplasmic.

This sequence belongs to the prespore-cell-inducing factor family.

It is found in the membrane. In Dictyostelium discoideum (Social amoeba), this protein is Protein psiM (psiM).